Consider the following 493-residue polypeptide: Solute carrier family 2, facilitated glucose transporter member 3 (493 aa).

The Cytoplasmic segment spans residues 1-10 (MGTTKVTPSL). Residues 11–32 (VFAVTVATIGSFQFGYNTGVIN) traverse the membrane as a helical segment. Topologically, residues 33–64 (APETILKDFLNYTLEERLEDLPSEGLLTALWS) are extracellular. The N-linked (GlcNAc...) asparagine glycan is linked to asparagine 43. The chain crosses the membrane as a helical span at residues 65–85 (LCVAIFSVGGMIGSFSVGLFV). The Cytoplasmic segment spans residues 86–90 (NRFGR). Residues 91 to 111 (RNSMLLVNLLAIIAGCLMGFA) traverse the membrane as a helical segment. The Extracellular segment spans residues 112 to 118 (KIAESVE). Residues 119–142 (MLILGRLLIGIFCGLCTGFVPMYI) form a helical membrane-spanning segment. Topologically, residues 143–153 (GEVSPTALRGA) are cytoplasmic. Residues 154–174 (FGTLNQLGIVVGILVAQIFGL) form a helical membrane-spanning segment. Position 159 (glutamine 159) interacts with D-glucose. The Extracellular segment spans residues 175 to 183 (DFILGSEEL). The chain crosses the membrane as a helical span at residues 184–204 (WPGLLGLTIIPAILQSAALPF). Residues 205–269 (CPESPRFLLI…LFRSPNYVQP (65 aa)) lie on the Cytoplasmic side of the membrane. Threonine 232 carries the phosphothreonine modification. The helical transmembrane segment at 270–290 (LLISIVLQLSQQLSGINAVFY) threads the bilayer. Residues 277-279 (QLS) form an important for selectivity against fructose region. Residues 280 to 281 (QQ) and asparagine 286 contribute to the D-glucose site. The Extracellular segment spans residues 291 to 304 (YSTGIFKDAGVQEP). A helical transmembrane segment spans residues 305-325 (IYATIGAGVVNTIFTVVSLFL). Residue asparagine 315 coordinates D-glucose. Residues 326-331 (VERAGR) lie on the Cytoplasmic side of the membrane. Residues 332–352 (RTLHMIGLGGMAVCSVFMTIS) form a helical membrane-spanning segment. The Extracellular segment spans residues 353–363 (LLLKDDYEAMS). A helical transmembrane segment spans residues 364 to 389 (FVCIVAILIYVAFFEIGPGPIPWFIV). Positions 378 and 386 each coordinate D-glucose. Over 390-399 (AELFSQGPRP) the chain is Cytoplasmic. Residues 400 to 420 (AAIAVAGCCNWTSNFLVGMLF) form a helical membrane-spanning segment. Residues 421–429 (PSAAAYLGA) are Extracellular-facing. A helical membrane pass occupies residues 430–450 (YVFIIFAAFLIFFLIFTFFKV). The Cytoplasmic portion of the chain corresponds to 451–493 (PETKGRTFEDIARAFEGQAHSGKGPAGVELNSMQPVKETPGNA). Positions 469–493 (AHSGKGPAGVELNSMQPVKETPGNA) are disordered. Serine 471 and serine 482 each carry phosphoserine. Threonine 489 is modified (phosphothreonine).

The protein belongs to the major facilitator superfamily. Sugar transporter (TC 2.A.1.1) family. Glucose transporter subfamily. Interacts with SMIM43; the interaction may promote SLC2A3-mediated glucose transport to meet the energy needs of mesendoderm differentiation. In terms of tissue distribution, expressed in spermatozoa (at protein level). Detected in brain (at protein level). Abundantly expressed in the hippocampus, cerebellum and cerebral cortex with lower expression in the dentate gyrus and piriform cortex.

It localises to the cell membrane. The protein localises to the perikaryon. It is found in the cell projection. It catalyses the reaction D-glucose(out) = D-glucose(in). The catalysed reaction is D-galactose(in) = D-galactose(out). With respect to regulation, deoxyglucose transport is inhibited by D-glucose, D-galactose and maltose. Galactose transport is inhibited by D-glucose and maltose. In terms of biological role, facilitative glucose transporter. Can also mediate the uptake of various other monosaccharides across the cell membrane. Mediates the uptake of glucose, 2-deoxyglucose, galactose, mannose, xylose and fucose, and probably also dehydroascorbate. Does not mediate fructose transport. Required for mesendoderm differentiation. This is Solute carrier family 2, facilitated glucose transporter member 3 from Mus musculus (Mouse).